A 233-amino-acid chain; its full sequence is Clathrin light chain (233 aa).

Residues 1–124 (MSEKFPPLED…EDRSEVVDQW (124 aa)) form a disordered region. A compositionally biased stretch (basic and acidic residues) spans 17–43 (PNDKKDDDTDFLKREAEILGDEFKTEQ). T49 is subject to Phosphothreonine. Position 52 is a phosphoserine (S52). The span at 56 to 67 (DDDEIRDFEEQF) shows a compositional bias: acidic residues. A compositionally biased stretch (polar residues) spans 69–92 (DINSANGAVSSDQNGSATVSSGND). A compositionally biased stretch (basic and acidic residues) spans 112-124 (SVKEDRSEVVDQW). The stretch at 125-186 (KQRRAVEIHE…EAFLKKRDEF (62 aa)) forms a coiled coil. The involved in binding clathrin heavy chain stretch occupies residues 144–204 (KELQDEAIKH…DRALQLINQD (61 aa)).

The protein belongs to the clathrin light chain family. As to quaternary structure, clathrin coats are formed from molecules containing 3 heavy chains and 3 light chains. Interacts with the auxilin-like clathrin uncoating factor SWA2.

It is found in the cytoplasmic vesicle membrane. It localises to the membrane. The protein resides in the coated pit. In terms of biological role, clathrin is the major protein of the polyhedral coat of coated pits and vesicles. In yeast, it is involved in the retention of proteins in an intracellular membrane compartment, presumably the trans-Golgi. The yeast light chain is important for cell growth. The light chain may help to properly orient the assembly/ disassembly of the clathrin coats. The sequence is that of Clathrin light chain (CLC1) from Saccharomyces cerevisiae (strain ATCC 204508 / S288c) (Baker's yeast).